The following is a 700-amino-acid chain: Elongation factor G (700 aa).

One can recognise a tr-type G domain in the interval 8–290; sequence ERYRNIGISA…AVIDYLPSPV (283 aa). GTP is bound by residues 17–24, 88–92, and 142–145; these read AHIDAGKT, DTPGH, and NKMD.

This sequence belongs to the TRAFAC class translation factor GTPase superfamily. Classic translation factor GTPase family. EF-G/EF-2 subfamily.

It is found in the cytoplasm. Functionally, catalyzes the GTP-dependent ribosomal translocation step during translation elongation. During this step, the ribosome changes from the pre-translocational (PRE) to the post-translocational (POST) state as the newly formed A-site-bound peptidyl-tRNA and P-site-bound deacylated tRNA move to the P and E sites, respectively. Catalyzes the coordinated movement of the two tRNA molecules, the mRNA and conformational changes in the ribosome. The polypeptide is Elongation factor G (Paracidovorax citrulli (strain AAC00-1) (Acidovorax citrulli)).